The chain runs to 104 residues: Putative heat shock protein PS1 (104 aa).

2 N-linked (GlcNAc...) asparagine glycosylation sites follow: N11 and N18. An ATP-binding site is contributed by N18.

It belongs to the heat shock protein 90 family. As to quaternary structure, homodimer.

It is found in the cytoplasm. Putative molecular chaperone that may promote the maturation, structural maintenance and proper regulation of specific target proteins. This is Putative heat shock protein PS1 from Pinus strobus (Eastern white pine).